Consider the following 315-residue polypeptide: Serpentine receptor class delta-31 (315 aa).

Helical transmembrane passes span 6–26 (LHSI…YLAI), 38–58 (AIIT…FFVM), 83–103 (ACYV…IWMI), 124–144 (VFVA…WFSI), 174–194 (ITLI…YIWI), 225–245 (FQVF…SMFT), and 256–276 (AISV…ILFV).

This sequence belongs to the nematode receptor-like protein srd family.

The protein resides in the membrane. The chain is Serpentine receptor class delta-31 (srd-31) from Caenorhabditis elegans.